The primary structure comprises 299 residues: MEEVEISTEKKSNPVKSFIAGGVGGMCNVLVGHPLDTIKVRLQTMPTPPPGQPPRYKGVIDCAARTFRYEGFRGFYRGISAPLVGVTPIYAVDFAVYAAGKRLFQTDDHIRLTYPQIFAAGALAGVCSALVTVPTDRIKVLLQTQTVSNGPLLYNGTIDTAAKLYRQGGIRSLFKGTCACILRDSPTGFYFVTYEFLQELARKKSANGKISTTSTILSGGTAGIVFWTLAVPFDVLKSRLQSAPEGTYKHGIRSVFRNLMATEGPKALFRGILPILLRAFPSTAAVFFGVELTNDLLKA.

Solcar repeat units lie at residues 12 to 103 (SNPV…GKRL), 112 to 200 (LTYP…LQEL), and 210 to 296 (ISTT…TNDL). 4 helical membrane-spanning segments follow: residues 79–99 (ISAPLVGVTPIYAVDFAVYAA), 114–134 (YPQIFAAGALAGVCSALVTVP), 216–236 (ILSGGTAGIVFWTLAVPFDVL), and 272–292 (ILPILLRAFPSTAAVFFGVEL).

This sequence belongs to the mitochondrial carrier (TC 2.A.29) family.

The protein localises to the mitochondrion membrane. Mediates efflux of magnesium ions from mitochondria, suggesting a role in magnesium homeostasis. The protein is Mitochondrial magnesium exporter 1 of Drosophila melanogaster (Fruit fly).